A 247-amino-acid chain; its full sequence is Probable transcriptional regulatory protein Gbem_3313 (247 aa).

It belongs to the TACO1 family.

Its subcellular location is the cytoplasm. The polypeptide is Probable transcriptional regulatory protein Gbem_3313 (Citrifermentans bemidjiense (strain ATCC BAA-1014 / DSM 16622 / JCM 12645 / Bem) (Geobacter bemidjiensis)).